The sequence spans 293 residues: Methylsterol monooxygenase 1 (293 aa).

2 helical membrane-spanning segments follow: residues leucine 55 to isoleucine 75 and lysine 100 to threonine 120. A Fatty acid hydroxylase domain is found at glycine 144 to threonine 274. Residues histidine 157–histidine 161 carry the Histidine box-1 motif. Residues histidine 170 to histidine 174 carry the Histidine box-2 motif. The chain crosses the membrane as a helical span at residues phenylalanine 199–isoleucine 219. Residues histidine 249 to methionine 255 carry the Histidine box-3 motif.

Belongs to the sterol desaturase family. It depends on Fe cation as a cofactor. In terms of processing, ubiquitinated by MARCHF6, leading to proteasomal degradation.

The protein localises to the endoplasmic reticulum membrane. It carries out the reaction 4,4-dimethyl-5alpha-cholest-7-en-3beta-ol + 6 Fe(II)-[cytochrome b5] + 3 O2 + 5 H(+) = 4alpha-carboxy-4beta-methyl-5alpha-cholest-7-ene-3beta-ol + 6 Fe(III)-[cytochrome b5] + 4 H2O. It catalyses the reaction 4,4-dimethyl-5alpha-cholesta-8,24-dien-3beta-ol + 6 Fe(II)-[cytochrome b5] + 3 O2 + 5 H(+) = 4beta-methylzymosterol-4alpha-carboxylate + 6 Fe(III)-[cytochrome b5] + 4 H2O. The enzyme catalyses 4alpha-methylzymosterol + 6 Fe(II)-[cytochrome b5] + 3 O2 + 5 H(+) = 4alpha-carboxyzymosterol + 6 Fe(III)-[cytochrome b5] + 4 H2O. The catalysed reaction is 4alpha-methyl-5alpha-cholest-7-en-3beta-ol + 6 Fe(II)-[cytochrome b5] + 3 O2 + 5 H(+) = 4alpha-carboxy-5alpha-cholest-7-en-3beta-ol + 6 Fe(III)-[cytochrome b5] + 4 H2O. It carries out the reaction 4,4-dimethyl-5alpha-cholest-8-en-3beta-ol + 6 Fe(II)-[cytochrome b5] + 3 O2 + 5 H(+) = 4alpha-carboxy-4beta-methyl-5alpha-cholest-8-en-3beta-ol + 6 Fe(III)-[cytochrome b5] + 4 H2O. It catalyses the reaction 4alpha-methyl-5alpha-cholest-8-en-3beta-ol + 6 Fe(II)-[cytochrome b5] + 3 O2 + 5 H(+) = 4alpha-carboxy-5alpha-cholest-8-ene-3beta-ol + 6 Fe(III)-[cytochrome b5] + 4 H2O. Its pathway is steroid biosynthesis; zymosterol biosynthesis; zymosterol from lanosterol: step 3/6. The protein operates within steroid biosynthesis; cholesterol biosynthesis. Its function is as follows. Catalyzes the three-step monooxygenation required for the demethylation of 4,4-dimethyl and 4alpha-methylsterols, which can be subsequently metabolized to cholesterol. The sequence is that of Methylsterol monooxygenase 1 (Msmo1) from Mus musculus (Mouse).